A 250-amino-acid chain; its full sequence is NH(3)-dependent NAD(+) synthetase (250 aa).

30–37 provides a ligand contact to ATP; sequence GVSGGIDS. Asp36 serves as a coordination point for Mg(2+). Arg117 contacts deamido-NAD(+). Thr137 contacts ATP. Residue Glu142 coordinates Mg(2+). Lys150 and Asp157 together coordinate deamido-NAD(+). 2 residues coordinate ATP: Lys166 and Ser188. 234–235 contributes to the deamido-NAD(+) binding site; that stretch reads HK.

This sequence belongs to the NAD synthetase family. In terms of assembly, homodimer.

The catalysed reaction is deamido-NAD(+) + NH4(+) + ATP = AMP + diphosphate + NAD(+) + H(+). It participates in cofactor biosynthesis; NAD(+) biosynthesis; NAD(+) from deamido-NAD(+) (ammonia route): step 1/1. In terms of biological role, catalyzes the ATP-dependent amidation of deamido-NAD to form NAD. Uses ammonia as a nitrogen source. This is NH(3)-dependent NAD(+) synthetase from Mannheimia succiniciproducens (strain KCTC 0769BP / MBEL55E).